Consider the following 203-residue polypeptide: UPF0301 protein Sde_3637 (203 aa).

It belongs to the UPF0301 (AlgH) family.

This is UPF0301 protein Sde_3637 from Saccharophagus degradans (strain 2-40 / ATCC 43961 / DSM 17024).